The primary structure comprises 539 residues: CTP synthase (539 aa).

Positions 1-267 (MTKYIFVTGG…DQKVCDFLHL (267 aa)) are amidoligase domain. Serine 13 is a binding site for CTP. Serine 13 serves as a coordination point for UTP. 14–19 (SLGKGI) contributes to the ATP binding site. L-glutamine is bound at residue tyrosine 54. ATP is bound at residue aspartate 71. Aspartate 71 and glutamate 141 together coordinate Mg(2+). CTP is bound by residues 148–150 (DIE), 188–193 (KTKPTQ), and lysine 224. Residues 188–193 (KTKPTQ) and lysine 224 each bind UTP. A Glutamine amidotransferase type-1 domain is found at 294-537 (KITLVGKYVE…IGAASGLPAQ (244 aa)). L-glutamine is bound at residue glycine 356. The active-site Nucleophile; for glutamine hydrolysis is the cysteine 383. Residues 384 to 387 (LGMQ), glutamate 407, and arginine 465 each bind L-glutamine. Catalysis depends on residues histidine 510 and glutamate 512.

The protein belongs to the CTP synthase family. In terms of assembly, homotetramer.

The enzyme catalyses UTP + L-glutamine + ATP + H2O = CTP + L-glutamate + ADP + phosphate + 2 H(+). It catalyses the reaction L-glutamine + H2O = L-glutamate + NH4(+). The catalysed reaction is UTP + NH4(+) + ATP = CTP + ADP + phosphate + 2 H(+). It functions in the pathway pyrimidine metabolism; CTP biosynthesis via de novo pathway; CTP from UDP: step 2/2. With respect to regulation, allosterically activated by GTP, when glutamine is the substrate; GTP has no effect on the reaction when ammonia is the substrate. The allosteric effector GTP functions by stabilizing the protein conformation that binds the tetrahedral intermediate(s) formed during glutamine hydrolysis. Inhibited by the product CTP, via allosteric rather than competitive inhibition. In terms of biological role, catalyzes the ATP-dependent amination of UTP to CTP with either L-glutamine or ammonia as the source of nitrogen. Regulates intracellular CTP levels through interactions with the four ribonucleotide triphosphates. This chain is CTP synthase, found in Lactobacillus acidophilus (strain ATCC 700396 / NCK56 / N2 / NCFM).